Consider the following 103-residue polypeptide: Small ribosomal subunit protein uS10 (103 aa).

Belongs to the universal ribosomal protein uS10 family. In terms of assembly, part of the 30S ribosomal subunit.

Involved in the binding of tRNA to the ribosomes. The protein is Small ribosomal subunit protein uS10 of Xylella fastidiosa (strain M12).